Reading from the N-terminus, the 215-residue chain is LysM and putative peptidoglycan-binding domain-containing protein 2 (215 aa).

The segment at 1–40 (MADSSPAPSLRAGGPREPRPSAPSPPPPHSRLGSEAEEAE) is disordered. At Ala2 the chain carries N-acetylalanine. Residues Ser5, Ser24, Ser34, and Ser58 each carry the phosphoserine modification. The segment covering 20 to 29 (PSAPSPPPPH) has biased composition (pro residues). Residues 72–116 (VEHRVRAGDTLQGIALKYGVSMEQIKRANKLFTNDCIFLKKTLNI) enclose the LysM domain. Residues 194-215 (AKKLKGESRDEEGLYTASLYHS) are disordered.

This Bos taurus (Bovine) protein is LysM and putative peptidoglycan-binding domain-containing protein 2 (LYSMD2).